Consider the following 168-residue polypeptide: Pleiotrophin (168 aa).

Positions 1–32 (MQTPQYLQQRRKFAAAFLAFIFILAAVDTAEA) are cleaved as a signal peptide. 5 cysteine pairs are disulfide-bonded: C47–C76, C55–C85, C62–C89, C99–C131, and C109–C141. Chondroitin sulfate binding stretches follow at residues 92 to 99 (KKQFGAEC) and 123 to 131 (KRALHNADC). The disordered stretch occupies residues 141–168 (CGKLTKSKPQAESKKKKKEGKKQEKMLD). Residues 147 to 168 (SKPQAESKKKKKEGKKQEKMLD) form a chondroitin sulfate A binding region.

In terms of assembly, interacts with ALK and NEK6. Interacts with PTPRZ1 (via chondroitin sulfate groups); promotes formation of homooligomers; oligomerization impairs tyrosine phosphatase activity. Forms a complex with PTPRZ1 and CTNNB1; this complex inactivates PTPRZ1 protein tyrosine phosphatase activity through PTN interaction and stimulates tyrosine phosphorylation of CTNNB1. Interacts with ITGB3 and ITGA5. Forms a complex with PTPRZ1 and integrin alpha-V/beta-3 (ITGAV:ITGB3) that stimulates endothelial cell migration through ITGB3 'Tyr-773' phosphorylation. Interacts with SDC3 (via heparan sulfate chains); this interaction mediates the neurite outgrowth-promoting signal from PTN to the cytoskeleton of growing neurites; this interaction mediates osteoblast recruitment. Interacts with GPC2 (via heparan sulfate); this interaction promotes neurite outgrowth through binding of PTN with chondroitin sulfate of proteoglycans, thereby releasing PTPRS of chondroitin sulfate proteoglycans (CSPGs) and leading to binding with heparan sulfate of GPC2. In terms of processing, phosphorylated by NEK6.

The protein resides in the secreted. Secreted growth factor that mediates its signal through cell-surface proteoglycan and non-proteoglycan receptors. Binds cell-surface proteoglycan receptor via their chondroitin sulfate (CS) groups. Thereby regulates many processes like cell proliferation, cell survival, cell growth, cell differentiation and cell migration in several tissues namely neuron and bone. Also plays a role in synaptic plasticity and learning-related behavior by inhibiting long-term synaptic potentiation. Binds PTPRZ1, leading to neutralization of the negative charges of the CS chains of PTPRZ1, inducing PTPRZ1 clustering, thereby causing the dimerization and inactivation of its phosphatase activity leading to increased tyrosine phosphorylation of each of the PTPRZ1 substrates like ALK, CTNNB1 or AFAP1L2 in order to activate the PI3K-AKT pathway. Through PTPRZ1 binding controls oligodendrocyte precursor cell differentiation by enhancing the phosphorylation of AFAP1L2 in order to activate the PI3K-AKT pathway. Forms a complex with PTPRZ1 and integrin alpha-V/beta-3 (ITGAV:ITGB3) that stimulates endothelial cell migration through SRC dephosphorylation and activation that consequently leads to ITGB3 'Tyr-773' phosphorylation. In adult hippocampus promotes dendritic arborization, spine development, and functional integration and connectivity of newborn granule neurons through ALK by activating AKT signaling pathway. Binds GPC2 and chondroitin sulfate proteoglycans (CSPGs) at the neuron surface, leading to abrogation of binding between PTPRS and CSPGs and neurite outgrowth promotion. Binds SDC3 and mediates bone formation by recruiting and attaching osteoblasts/osteoblast precursors to the sites for new bone deposition. Binds ALK and promotes cell survival and cell proliferation through MAPK pathway activation. Inhibits proliferation and enhances differentiation of neural stem cells by inhibiting FGF2-induced fibroblast growth factor receptor signaling pathway. Mediates regulatory mechanisms in normal hemostasis and in hematopoietic regeneration and in maintaining the balance of myeloid and lymphoid regeneration. In addition may play a role in the female reproductive system, auditory response and the progesterone-induced decidualization pathway. The polypeptide is Pleiotrophin (Bos taurus (Bovine)).